The chain runs to 246 residues: Triosephosphate isomerase (246 aa).

9 to 11 (NWK) provides a ligand contact to substrate. The active-site Electrophile is the His95. Glu165 (proton acceptor) is an active-site residue. Residues Gly171, Ser210, and 231-232 (GG) each bind substrate.

The protein belongs to the triosephosphate isomerase family. As to quaternary structure, homodimer.

It is found in the cytoplasm. The catalysed reaction is D-glyceraldehyde 3-phosphate = dihydroxyacetone phosphate. It functions in the pathway carbohydrate biosynthesis; gluconeogenesis. Its pathway is carbohydrate degradation; glycolysis; D-glyceraldehyde 3-phosphate from glycerone phosphate: step 1/1. Functionally, involved in the gluconeogenesis. Catalyzes stereospecifically the conversion of dihydroxyacetone phosphate (DHAP) to D-glyceraldehyde-3-phosphate (G3P). The chain is Triosephosphate isomerase from Thermodesulfovibrio yellowstonii (strain ATCC 51303 / DSM 11347 / YP87).